A 901-amino-acid chain; its full sequence is HTH-type transcriptional regulator MalT (901 aa).

Residue 39–46 coordinates ATP; sequence SPAGYGKT. One can recognise an HTH luxR-type domain in the interval 829–894; it reads ELIRTSPLTQ…DAVQHAQQLL (66 aa). Positions 853-872 form a DNA-binding region, H-T-H motif; that stretch reads NEQIAGELDVAATTIKTHIR.

Belongs to the MalT family. Monomer in solution. Oligomerizes to an active state in the presence of the positive effectors ATP and maltotriose.

Activated by ATP and maltotriose, which are both required for DNA binding. In terms of biological role, positively regulates the transcription of the maltose regulon whose gene products are responsible for uptake and catabolism of malto-oligosaccharides. Specifically binds to the promoter region of its target genes, recognizing a short DNA motif called the MalT box. The chain is HTH-type transcriptional regulator MalT from Klebsiella pneumoniae (strain 342).